Here is a 195-residue protein sequence, read N- to C-terminus: Dephospho-CoA kinase (195 aa).

The region spanning 4 to 195 (IIGLTGGIAS…EQILDALQRL (192 aa)) is the DPCK domain. Position 12 to 17 (12 to 17 (ASGKST)) interacts with ATP.

Belongs to the CoaE family.

The protein resides in the cytoplasm. The catalysed reaction is 3'-dephospho-CoA + ATP = ADP + CoA + H(+). The protein operates within cofactor biosynthesis; coenzyme A biosynthesis; CoA from (R)-pantothenate: step 5/5. Catalyzes the phosphorylation of the 3'-hydroxyl group of dephosphocoenzyme A to form coenzyme A. In Streptococcus agalactiae serotype Ia (strain ATCC 27591 / A909 / CDC SS700), this protein is Dephospho-CoA kinase.